A 485-amino-acid chain; its full sequence is Glutamyl-tRNA(Gln) amidotransferase subunit A (485 aa).

Active-site charge relay system residues include Lys-78 and Ser-153. Residue Ser-177 is the Acyl-ester intermediate of the active site.

Belongs to the amidase family. GatA subfamily. In terms of assembly, heterotrimer of A, B and C subunits.

The catalysed reaction is L-glutamyl-tRNA(Gln) + L-glutamine + ATP + H2O = L-glutaminyl-tRNA(Gln) + L-glutamate + ADP + phosphate + H(+). Functionally, allows the formation of correctly charged Gln-tRNA(Gln) through the transamidation of misacylated Glu-tRNA(Gln) in organisms which lack glutaminyl-tRNA synthetase. The reaction takes place in the presence of glutamine and ATP through an activated gamma-phospho-Glu-tRNA(Gln). The chain is Glutamyl-tRNA(Gln) amidotransferase subunit A from Bacillus anthracis (strain A0248).